We begin with the raw amino-acid sequence, 126 residues long: Protein ApaG (126 aa).

The ApaG domain occupies 2-126 (SDSRYKVDVS…FRLAVPGSLH (125 aa)).

This is Protein ApaG from Pseudomonas syringae pv. tomato (strain ATCC BAA-871 / DC3000).